A 426-amino-acid polypeptide reads, in one-letter code: Enolase (426 aa).

Q163 lines the (2R)-2-phosphoglycerate pocket. E205 (proton donor) is an active-site residue. Mg(2+)-binding residues include D242, E285, and D312. The (2R)-2-phosphoglycerate site is built by K337, R366, S367, and K388. The Proton acceptor role is filled by K337.

This sequence belongs to the enolase family. As to quaternary structure, component of the RNA degradosome, a multiprotein complex involved in RNA processing and mRNA degradation. Mg(2+) is required as a cofactor.

It is found in the cytoplasm. The protein resides in the secreted. It localises to the cell surface. The enzyme catalyses (2R)-2-phosphoglycerate = phosphoenolpyruvate + H2O. It functions in the pathway carbohydrate degradation; glycolysis; pyruvate from D-glyceraldehyde 3-phosphate: step 4/5. In terms of biological role, catalyzes the reversible conversion of 2-phosphoglycerate (2-PG) into phosphoenolpyruvate (PEP). It is essential for the degradation of carbohydrates via glycolysis. The polypeptide is Enolase (Nitrosococcus oceani (strain ATCC 19707 / BCRC 17464 / JCM 30415 / NCIMB 11848 / C-107)).